The sequence spans 81 residues: ATP synthase subunit c (81 aa).

Transmembrane regions (helical) follow at residues A6–I26 and L57–A77.

This sequence belongs to the ATPase C chain family. As to quaternary structure, F-type ATPases have 2 components, F(1) - the catalytic core - and F(0) - the membrane proton channel. F(1) has five subunits: alpha(3), beta(3), gamma(1), delta(1), epsilon(1). F(0) has four main subunits: a(1), b(1), b'(1) and c(10-14). The alpha and beta chains form an alternating ring which encloses part of the gamma chain. F(1) is attached to F(0) by a central stalk formed by the gamma and epsilon chains, while a peripheral stalk is formed by the delta, b and b' chains.

The protein localises to the cellular thylakoid membrane. Its function is as follows. F(1)F(0) ATP synthase produces ATP from ADP in the presence of a proton or sodium gradient. F-type ATPases consist of two structural domains, F(1) containing the extramembraneous catalytic core and F(0) containing the membrane proton channel, linked together by a central stalk and a peripheral stalk. During catalysis, ATP synthesis in the catalytic domain of F(1) is coupled via a rotary mechanism of the central stalk subunits to proton translocation. In terms of biological role, key component of the F(0) channel; it plays a direct role in translocation across the membrane. A homomeric c-ring of between 10-14 subunits forms the central stalk rotor element with the F(1) delta and epsilon subunits. This Picosynechococcus sp. (strain ATCC 27264 / PCC 7002 / PR-6) (Agmenellum quadruplicatum) protein is ATP synthase subunit c.